Consider the following 265-residue polypeptide: tRNA pseudouridine synthase A (265 aa).

The Nucleophile role is filled by aspartate 52. Residue tyrosine 105 participates in substrate binding.

This sequence belongs to the tRNA pseudouridine synthase TruA family.

It carries out the reaction uridine(38/39/40) in tRNA = pseudouridine(38/39/40) in tRNA. Functionally, formation of pseudouridine at positions 38, 39 and 40 in the anticodon stem and loop of transfer RNAs. In Archaeoglobus fulgidus (strain ATCC 49558 / DSM 4304 / JCM 9628 / NBRC 100126 / VC-16), this protein is tRNA pseudouridine synthase A.